The chain runs to 62 residues: Conotoxin TxIC (62 aa).

The N-terminal stretch at 1–22 (MHCLPIFVILLLLTASGPSVDA) is a signal peptide. Residues 23-47 (QLKTKDDVPLSSFRDHAKSTLRRLQ) constitute a propeptide that is removed on maturation. 2 disulfides stabilise this stretch: Cys-52–Cys-58 and Cys-53–Cys-61. At Pro-60 the chain carries 4-hydroxyproline. The residue at position 61 (Cys-61) is a Cysteine amide.

It belongs to the conotoxin A superfamily. As to expression, expressed by the venom duct.

The protein localises to the secreted. The protein is Conotoxin TxIC of Conus textile (Cloth-of-gold cone).